Reading from the N-terminus, the 376-residue chain is Pyruvate dehydrogenase E1 component subunit beta-2, mitochondrial (376 aa).

A mitochondrion-targeting transit peptide spans 1-36 (MLGAARRQLGSGPMLGQVLRRLRPATAAAADAARAY). Glu99 contacts thiamine diphosphate. K(+) is bound by residues Ile152, Ala200, Ile201, and Asp203.

In terms of assembly, tetramer of 2 alpha and 2 beta subunits. The cofactor is thiamine diphosphate.

Its subcellular location is the mitochondrion matrix. It carries out the reaction N(6)-[(R)-lipoyl]-L-lysyl-[protein] + pyruvate + H(+) = N(6)-[(R)-S(8)-acetyldihydrolipoyl]-L-lysyl-[protein] + CO2. The pyruvate dehydrogenase complex catalyzes the overall conversion of pyruvate to acetyl-CoA and CO(2). It contains multiple copies of three enzymatic components: pyruvate dehydrogenase (E1), dihydrolipoamide acetyltransferase (E2) and lipoamide dehydrogenase (E3). The polypeptide is Pyruvate dehydrogenase E1 component subunit beta-2, mitochondrial (Oryza sativa subsp. japonica (Rice)).